The following is a 211-amino-acid chain: N,O-diacetylmuramidase (211 aa).

Residues aspartate 6 and glutamate 100 contribute to the active site. A disulfide bond links cysteine 108 and cysteine 147.

The protein belongs to the glycosyl hydrolase 25 family.

The protein resides in the secreted. It localises to the extracellular space. It carries out the reaction Hydrolysis of (1-&gt;4)-beta-linkages between N-acetylmuramic acid and N-acetyl-D-glucosamine residues in a peptidoglycan and between N-acetyl-D-glucosamine residues in chitodextrins.. In terms of biological role, this enzyme has both lysozyme (acetylmuramidase) and diacetylmuramidase activities. This Chalaropsis sp protein is N,O-diacetylmuramidase.